A 61-amino-acid polypeptide reads, in one-letter code: Large ribosomal subunit protein bL32 (61 aa).

The protein belongs to the bacterial ribosomal protein bL32 family.

The sequence is that of Large ribosomal subunit protein bL32 from Phytoplasma mali (strain AT).